A 1707-amino-acid chain; its full sequence is MDQEGGGDGQKAPSFQWRNYKLIVDPALDPALRRPSQKVYRYDGVHFSVNDSKYIPVEDLQDPRCHVRSKNRDFSLPVPKFKLDEFYIGQIPLKEVTFARLNDNVRETFLKDMCRKYGEVEEVEILLHPRTRKHLGLARVLFTSTRGAKETVKNLHLTSVMGNIIHAQLDIKGQQRMKYYELIVNGSYTPQTVPTGGKALSEKFQGSGAATETAESRRRSSSDTAAYPAGTTAVGTPGNGTPCSQDTSFSSSRQDTPSSFGQFTPQSSQGTPYTSRGSTPYSQDSAYSSSTTSTSFKPRRSENSYQDAFSRRHFSASSASTTASTAIAATTAATASSSASSSSLSSSSSSSSSSSSSQFRSSDANYPAYYESWNRYQRHTSYPPRRATREEPPGAPFAENTAERFPPSYTSYLPPEPSRPTDQDYRPPASEAPPPEPPEPGGGGGGGGPSPEREEVRTSPRPASPARSGSPAPETTNESVPFAQHSSLDSRIEMLLKEQRSKFSFLASDTEEEEENSSMVLGARDTGSEVPSGSGHGPCTPPPAPANFEDVAPTGSGEPGATRESPKANGQNQASPCSSGDDMEISDDDRGGSPPPAPTPPQQPPPPPPPPPPPPPYLASLPLGYPPHQPAYLLPPRPDGPPPPEYPPPPPPPPHIYDFVNSLELMDRLGAQWGGMPMSFQMQTQMLTRLHQLRQGKGLIAASAGPPGGAFGEAFLPFPPPQEAAYGLPYALYAQGQEGRGAYSREAYHLPMPMAAEPLPSSSVSGEEARLPPREEAELAEGKTLPTAGTVGRVLAMLVQEMKSIMQRDLNRKMVENVAFGAFDQWWESKEEKAKPFQNAAKQQAKEEDKEKTKLKEPGLLSLVDWAKSGGTTGIEAFAFGSGLRGALRLPSFKVKRKEPSEISEASEEKRPRPSTPAEEDEDDPEQEKEAGEPGRPGTKPPKRDEERGKTQGKHRKSFALDSEGEEASQESSSEKDEEDDEEDEEDEDREEAVDTTKKETEVSDGEDEESDSSSKCSLYADSDGENDSTSDSESSSSSSSSSSSSSSSSSSSSSSSSESSSEDEEEEERPAALPSASPPPREVPVPTPAPVEVPVPERVAGSPVTPLPEQEASPARPAGPTEESPPSAPLRPPEPPAGPPAPAPRPDERPSSPIPLLPPPKKRRKTVSFSAIEVVPAPEPPPATPPQAKFPGPASRKAPRGVERTIRNLPLDHASLVKSWPEEVSRGGRSRAGGRGRLTEEEEAEPGTEVDLAVLADLALTPARRGLPALPAVEDSEATETSDEAERPRPLLSHILLEHNYALAVKPTPPAPALRPPEPVPAPAALFSSPADEVLEAPEVVVAEAEEPKPQQLQQQREEGEEEGEEEGEEEEEESSDSSSSSDGEGALRRRSLRSHARRRRPPPPPPPPPPRAYEPRSEFEQMTILYDIWNSGLDSEDMSYLRLTYERLLQQTSGADWLNDTHWVHHTITNLTTPKRKRRPQDGPREHQTGSARSEGYYPISKKEKDKYLDVCPVSARQLEGVDTQGTNRVLSERRSEQRRLLSAIGTSAIMDSDLLKLNQLKFRKKKLRFGRSRIHEWGLFAMEPIAADEMVIEYVGQNIRQMVADMREKRYVQEGIGSSYLFRVDHDTIIDATKCGNLARFINHCCTPNCYAKVITIESQKKIVIYSKQPIGVDEEITYDYKFPLEDNKIPCLCGTESCRGSLN.

The interval Leu60 to Gly89 is interaction with WDR82. The RRM domain maps to Asp84 to Lys172. Disordered stretches follow at residues Pro194–Ala308, Thr331–Asp363, Ser381–Ser486, Leu506–His655, Ala834–Lys854, Pro891–Val1251, and Ala1264–Leu1293. Positions Asn239 to Gly277 are enriched in polar residues. 2 stretches are compositionally biased toward low complexity: residues Ser278–Ser295 and Thr331–Ser357. Positions Ser430–Pro440 are enriched in pro residues. Phosphoserine is present on residues Ser459 and Ser464. The span at Ser459–Pro473 shows a compositional bias: low complexity. The segment covering Glu474 to Ser486 has biased composition (polar residues). A phosphoserine mark is found at Ser508 and Ser565. Residues Ala568–Ser578 are compositionally biased toward polar residues. Pro residues-rich tracts occupy residues Ser593 to Tyr617 and Gly624 to His655. Positions Gln844–Lys854 are enriched in basic and acidic residues. Phosphoserine is present on Ser915. Composition is skewed to acidic residues over residues Ala918–Gln927 and Lys976–Glu992. Positions Ala993–Glu1002 are enriched in basic and acidic residues. Residues Val1003–Asp1012 show a composition bias toward acidic residues. Residues Asp1032 to Ser1060 are compositionally biased toward low complexity. Over residues Ala1077–Val1094 the composition is skewed to pro residues. Ser1103 is subject to Phosphoserine. A compositionally biased stretch (pro residues) spans Pro1127 to Pro1145. Residues Glu1275–Asp1284 show a composition bias toward acidic residues. Residues Glu1299–Ala1303 carry the HCFC1-binding motif (HBM) motif. 2 disordered regions span residues Lys1307–Pro1417 and Asn1472–Tyr1499. A compositionally biased stretch (pro residues) spans Pro1308–Ala1323. A compositionally biased stretch (acidic residues) spans Glu1360–Ser1377. The segment covering Arg1390–Pro1403 has biased composition (basic residues). Positions Pro1404–Ala1414 are enriched in pro residues. The interval Tyr1415–Leu1450 is interaction with CFP1. An interaction with ASH2L, RBBP5 and WDR5 region spans residues Leu1450–Arg1537. A WDR5 interaction motif (WIN) motif is present at residues Gly1492–Glu1497. Positions Arg1537–Arg1542 match the RxxxRR motif motif. Positions Lys1568–Lys1685 constitute an SET domain. Tyr1684 serves as a coordination point for S-adenosyl-L-methionine. A Post-SET domain is found at Asn1691–Asn1707.

It belongs to the class V-like SAM-binding methyltransferase superfamily. As to quaternary structure, component of the SET1A/COMPASS complex composed of the catalytic subunit SETD1A, WDR5, WDR82, RBBP5, ASH2L/ASH2, CXXC1/CFP1, HCFC1 and DPY30 homotrimer. Forms a core complex with the evolutionary conserved subcomplex WRAD composed of WDR5, RBBP5, ASH2L/ASH2 and DPY30 subunits; WRAD differentially stimulates the methyltransferase activity. Interacts with BOD1L1 (via COMPASS-Shg1 domain) at replication forks. Interacts with HCFC1. Interacts with ASH2/ASH2L. Interacts with CXXC1/CFP1. Interacts with RBBP5. Interacts (via N-terminal region) with WDR82; the interaction is direct. Interacts (via the RRM domain) with hyperphosphorylated C-terminal domain (CTD) of RNA polymerase II large subunit (POLR2A) only in the presence of WDR82. Binds specifically to CTD heptad repeats phosphorylated on 'Ser-5' of each heptad. Interacts with ZNF335. Interacts with SUPT6H. Interacts with NAP1L1. Interacts (via WIN motif) with WDR5.

It is found in the nucleus speckle. It localises to the chromosome. The protein resides in the cytoplasm. It catalyses the reaction L-lysyl(4)-[histone H3] + S-adenosyl-L-methionine = N(6)-methyl-L-lysyl(4)-[histone H3] + S-adenosyl-L-homocysteine + H(+). The enzyme catalyses N(6)-methyl-L-lysyl(4)-[histone H3] + S-adenosyl-L-methionine = N(6),N(6)-dimethyl-L-lysyl(4)-[histone H3] + S-adenosyl-L-homocysteine + H(+). It carries out the reaction N(6),N(6)-dimethyl-L-lysyl(4)-[histone H3] + S-adenosyl-L-methionine = N(6),N(6),N(6)-trimethyl-L-lysyl(4)-[histone H3] + S-adenosyl-L-homocysteine + H(+). Functionally, histone methyltransferase that catalyzes methyl group transfer from S-adenosyl-L-methionine to the epsilon-amino group of 'Lys-4' of histone H3 (H3K4) via a non-processive mechanism. Part of chromatin remodeling machinery, forms H3K4me1, H3K4me2 and H3K4me3 methylation marks at active chromatin sites where transcription and DNA repair take place. Responsible for H3K4me3 enriched promoters and transcriptional programming of inner mass stem cells and neuron progenitors during embryogenesis. Required for H3K4me1 mark at stalled replication forks. Mediates FANCD2-dependent nucleosome remodeling and RAD51 nucleofilaments stabilization at reversed forks, protecting them from nucleolytic degradation. Does not methylate 'Lys-4' of histone H3 if the neighboring 'Lys-9' residue is already methylated. Binds RNAs involved in RNA processing and the DNA damage response. The sequence is that of Histone-lysine N-methyltransferase SETD1A (SETD1A) from Homo sapiens (Human).